Consider the following 341-residue polypeptide: Mitochondrial transcription factor 1 (341 aa).

Leu23, Glu77, Asp101, and Asn137 together coordinate S-adenosyl-L-methionine.

The protein belongs to the class I-like SAM-binding methyltransferase superfamily. rRNA adenine N(6)-methyltransferase family.

The protein resides in the mitochondrion. Its function is as follows. Mitochondrial transcription factor that confers selective promoter recognition on the core subunit of the yeast mitochondrial RNA polymerase. Interacts with DNA in a non-specific manner. The protein is Mitochondrial transcription factor 1 (MTF1) of Saccharomyces paradoxus (Yeast).